An 876-amino-acid polypeptide reads, in one-letter code: Leucine--tRNA ligase (876 aa).

The 'HIGH' region motif lies at 42–52 (PYPSGKLHMGH). Residues 634-638 (KMSKS) carry the 'KMSKS' region motif. Lysine 637 serves as a coordination point for ATP.

It belongs to the class-I aminoacyl-tRNA synthetase family.

It is found in the cytoplasm. The catalysed reaction is tRNA(Leu) + L-leucine + ATP = L-leucyl-tRNA(Leu) + AMP + diphosphate. In Neisseria meningitidis serogroup C (strain 053442), this protein is Leucine--tRNA ligase.